The following is a 259-amino-acid chain: Phosphatidylserine decarboxylase proenzyme (259 aa).

Active-site charge relay system; for autoendoproteolytic cleavage activity residues include aspartate 86, histidine 142, and serine 226. Serine 226 (schiff-base intermediate with substrate; via pyruvic acid; for decarboxylase activity) is an active-site residue. Serine 226 bears the Pyruvic acid (Ser); by autocatalysis mark.

This sequence belongs to the phosphatidylserine decarboxylase family. PSD-B subfamily. Prokaryotic type I sub-subfamily. In terms of assembly, heterodimer of a large membrane-associated beta subunit and a small pyruvoyl-containing alpha subunit. Pyruvate is required as a cofactor. Post-translationally, is synthesized initially as an inactive proenzyme. Formation of the active enzyme involves a self-maturation process in which the active site pyruvoyl group is generated from an internal serine residue via an autocatalytic post-translational modification. Two non-identical subunits are generated from the proenzyme in this reaction, and the pyruvate is formed at the N-terminus of the alpha chain, which is derived from the carboxyl end of the proenzyme. The autoendoproteolytic cleavage occurs by a canonical serine protease mechanism, in which the side chain hydroxyl group of the serine supplies its oxygen atom to form the C-terminus of the beta chain, while the remainder of the serine residue undergoes an oxidative deamination to produce ammonia and the pyruvoyl prosthetic group on the alpha chain. During this reaction, the Ser that is part of the protease active site of the proenzyme becomes the pyruvoyl prosthetic group, which constitutes an essential element of the active site of the mature decarboxylase.

It is found in the cell membrane. It carries out the reaction a 1,2-diacyl-sn-glycero-3-phospho-L-serine + H(+) = a 1,2-diacyl-sn-glycero-3-phosphoethanolamine + CO2. It functions in the pathway phospholipid metabolism; phosphatidylethanolamine biosynthesis; phosphatidylethanolamine from CDP-diacylglycerol: step 2/2. Its function is as follows. Catalyzes the formation of phosphatidylethanolamine (PtdEtn) from phosphatidylserine (PtdSer). In Halalkalibacterium halodurans (strain ATCC BAA-125 / DSM 18197 / FERM 7344 / JCM 9153 / C-125) (Bacillus halodurans), this protein is Phosphatidylserine decarboxylase proenzyme.